The chain runs to 233 residues: Antiholin-like protein LrgB (233 aa).

The next 7 membrane-spanning stretches (helical) occupy residues 7 to 27, 33 to 53, 63 to 83, 97 to 117, 124 to 144, 152 to 172, and 212 to 232; these read INTP…ATFL, GFFL…FLKL, IGGD…AIPL, ILGG…LIAE, GIIA…PVSA, LTSL…SKLI, and ISLV…ATLL.

This sequence belongs to the CidB/LrgB family. LrgB subfamily.

The protein localises to the cell membrane. In terms of biological role, inhibits the expression or activity of extracellular murein hydrolases by interacting, possibly with LrgA, with the holin-like proteins CidA and/or CidB. The LrgAB and CidAB proteins may affect the proton motive force of the membrane. May be involved in programmed cell death (PCD), possibly triggering PCD in response to antibiotics and environmental stresses. This Staphylococcus saprophyticus subsp. saprophyticus (strain ATCC 15305 / DSM 20229 / NCIMB 8711 / NCTC 7292 / S-41) protein is Antiholin-like protein LrgB.